The sequence spans 3380 residues: Apolipophorins (3380 aa).

The first 21 residues, 1 to 21 (MGTPPHIWFLLILAISSGGLS), serve as a signal peptide directing secretion. The 607-residue stretch at 40-646 (YQKGQTYTYS…SQSSYLPRSV (607 aa)) folds into the Vitellogenin domain. N-linked (GlcNAc...) asparagine glycans are attached at residues Asn132, Asn649, Asn969, Asn2174, Asn2851, and Asn3177. The VWFD domain occupies 2815–2979 (ATAILLNSHH…NAWKVDAQCA (165 aa)). Cys2839 and Cys2978 form a disulfide bridge.

Post-translationally, cleaved into 2 chains by furin protease. However, prevention of cleavage does not impair its function. N-glycosylated. As to expression, present in brain, hemolymph, fat body and eyes.

It localises to the secreted. Constitutes the major component of lipophorin, which mediates transport for various types of lipids in hemolymph. Acts by forming lipoprotein particles that bind lipoproteins and lipids. May be required for morphogens wingless (wg) and hedgehog (hh) function, possibly by acting as vehicles for the movement of wg and hh. In Locusta migratoria (Migratory locust), this protein is Apolipophorins.